A 108-amino-acid polypeptide reads, in one-letter code: Replication initiation control protein YabA (108 aa).

Zn(2+) contacts are provided by histidine 82, cysteine 84, cysteine 98, and cysteine 101.

It belongs to the YabA family. In terms of assembly, homotetramer. Interacts with both DnaA and DnaN, acting as a bridge between these two proteins. Zn(2+) serves as cofactor.

Its subcellular location is the cytoplasm. The protein resides in the nucleoid. Functionally, involved in control of chromosome replication initiation. Inhibits the cooperative binding of DnaA to the oriC region, thus negatively regulating initiation of chromosome replication. Inhibits the ability of DnaA-ATP to form a helix on DNA; does not disassemble preformed DnaA-DNA helices. Decreases the residence time of DnaA on the chromosome at its binding sites (oriC, replication forks and promoter-binding sites). Tethers DnaA to the replication machinery via the DNA polymerase beta sliding clamp subunit (dnaN). Associates with oriC and other DnaA targets on the chromosome in a DnaA-dependent manner. The sequence is that of Replication initiation control protein YabA from Streptococcus agalactiae serotype Ia (strain ATCC 27591 / A909 / CDC SS700).